The chain runs to 160 residues: Cytochrome b6-f complex subunit 4 (160 aa).

Helical transmembrane passes span 36–56, 95–115, and 131–151; these read LLYI…GLAV, LLGV…PFLE, and TVFL…TLPI.

This sequence belongs to the cytochrome b family. PetD subfamily. The 4 large subunits of the cytochrome b6-f complex are cytochrome b6, subunit IV (17 kDa polypeptide, petD), cytochrome f and the Rieske protein, while the 4 small subunits are petG, petL, petM and petN. The complex functions as a dimer.

The protein localises to the plastid. Its subcellular location is the chloroplast thylakoid membrane. In terms of biological role, component of the cytochrome b6-f complex, which mediates electron transfer between photosystem II (PSII) and photosystem I (PSI), cyclic electron flow around PSI, and state transitions. The protein is Cytochrome b6-f complex subunit 4 of Morus indica (Mulberry).